The following is a 417-amino-acid chain: NADH-quinone oxidoreductase subunit D (417 aa).

Belongs to the complex I 49 kDa subunit family. NDH-1 is composed of 14 different subunits. Subunits NuoB, C, D, E, F, and G constitute the peripheral sector of the complex.

It is found in the cell inner membrane. The catalysed reaction is a quinone + NADH + 5 H(+)(in) = a quinol + NAD(+) + 4 H(+)(out). Its function is as follows. NDH-1 shuttles electrons from NADH, via FMN and iron-sulfur (Fe-S) centers, to quinones in the respiratory chain. The immediate electron acceptor for the enzyme in this species is believed to be ubiquinone. Couples the redox reaction to proton translocation (for every two electrons transferred, four hydrogen ions are translocated across the cytoplasmic membrane), and thus conserves the redox energy in a proton gradient. The chain is NADH-quinone oxidoreductase subunit D from Ruthia magnifica subsp. Calyptogena magnifica.